We begin with the raw amino-acid sequence, 901 residues long: Protein translocase subunit SecA (901 aa).

Residues Q85, 103-107 (GEGKT), and D510 contribute to the ATP site. Residues 848 to 901 (RINQNNLPVDENSQTTQNSETEDYSDRRIGRNEPCPCGSGKKYKHCHGSRVARQ) are disordered. The span at 849 to 866 (INQNNLPVDENSQTTQNS) shows a compositional bias: polar residues. The Zn(2+) site is built by C882, C884, C893, and H894. Over residues 888–901 (KKYKHCHGSRVARQ) the composition is skewed to basic residues.

It belongs to the SecA family. As to quaternary structure, monomer and homodimer. Part of the essential Sec protein translocation apparatus which comprises SecA, SecYEG and auxiliary proteins SecDF-YajC and YidC. It depends on Zn(2+) as a cofactor.

The protein resides in the cell inner membrane. It localises to the cytoplasm. It catalyses the reaction ATP + H2O + cellular proteinSide 1 = ADP + phosphate + cellular proteinSide 2.. Functionally, part of the Sec protein translocase complex. Interacts with the SecYEG preprotein conducting channel. Has a central role in coupling the hydrolysis of ATP to the transfer of proteins into and across the cell membrane, serving both as a receptor for the preprotein-SecB complex and as an ATP-driven molecular motor driving the stepwise translocation of polypeptide chains across the membrane. The sequence is that of Protein translocase subunit SecA from Haemophilus influenzae (strain 86-028NP).